The primary structure comprises 503 residues: 4-trimethylaminobutyraldehyde dehydrogenase (503 aa).

NAD(+) is bound by residues Lys-189 and 241 to 245 (GSVPT). Glu-263 functions as the Proton acceptor in the catalytic mechanism. The active-site Nucleophile is Cys-297. Glu-400 lines the NAD(+) pocket.

The protein belongs to the aldehyde dehydrogenase family. As to quaternary structure, homotetramer.

The protein resides in the cytoplasm. The protein localises to the cytosol. The enzyme catalyses 4-(trimethylamino)butanal + NAD(+) + H2O = 4-(trimethylamino)butanoate + NADH + 2 H(+). It catalyses the reaction an aldehyde + NAD(+) + H2O = a carboxylate + NADH + 2 H(+). It participates in amine and polyamine biosynthesis; carnitine biosynthesis. Converts gamma-trimethylaminobutyraldehyde into gamma-butyrobetaine with high efficiency (in vitro). Can catalyze the irreversible oxidation of a broad range of aldehydes to the corresponding acids in an NAD-dependent reaction, but with low efficiency. The sequence is that of 4-trimethylaminobutyraldehyde dehydrogenase (aldh9A1) from Gadus morhua subsp. callarias (Baltic cod).